Reading from the N-terminus, the 174-residue chain is Peptide deformylase (174 aa).

Fe cation is bound by residues Cys-96 and His-138. The active site involves Glu-139. Residue His-142 participates in Fe cation binding.

It belongs to the polypeptide deformylase family. It depends on Fe(2+) as a cofactor.

The catalysed reaction is N-terminal N-formyl-L-methionyl-[peptide] + H2O = N-terminal L-methionyl-[peptide] + formate. Removes the formyl group from the N-terminal Met of newly synthesized proteins. Requires at least a dipeptide for an efficient rate of reaction. N-terminal L-methionine is a prerequisite for activity but the enzyme has broad specificity at other positions. In Helicobacter pylori (strain J99 / ATCC 700824) (Campylobacter pylori J99), this protein is Peptide deformylase.